Here is a 209-residue protein sequence, read N- to C-terminus: tRNA (guanine-N(7)-)-methyltransferase (209 aa).

Residues Asp-35, Glu-60, Asn-87, and Asp-113 each coordinate S-adenosyl-L-methionine. Asp-113 is an active-site residue. The substrate site is built by Lys-117 and Asp-149.

This sequence belongs to the class I-like SAM-binding methyltransferase superfamily. TrmB family.

It catalyses the reaction guanosine(46) in tRNA + S-adenosyl-L-methionine = N(7)-methylguanosine(46) in tRNA + S-adenosyl-L-homocysteine. It participates in tRNA modification; N(7)-methylguanine-tRNA biosynthesis. Functionally, catalyzes the formation of N(7)-methylguanine at position 46 (m7G46) in tRNA. The chain is tRNA (guanine-N(7)-)-methyltransferase from Prochlorococcus marinus subsp. pastoris (strain CCMP1986 / NIES-2087 / MED4).